A 347-amino-acid polypeptide reads, in one-letter code: Holliday junction branch migration complex subunit RuvB (347 aa).

Residues 1-183 are large ATPase domain (RuvB-L); it reads MSDERVVTPR…FGSVHRLEFY (183 aa). ATP is bound by residues L22, R23, G64, K67, T68, S69, 130–132, R173, Y183, and R220; that span reads EDF. Mg(2+) is bound at residue T68. The segment at 184-254 is small ATPAse domain (RuvB-S); it reads SVDALYEIVM…VARDALAKLE (71 aa). A head domain (RuvB-H) region spans residues 257-347; that stretch reads HLGLDENDRR…NGAEQGRLWT (91 aa). Residues R312 and R317 each coordinate DNA.

Belongs to the RuvB family. Homohexamer. Forms an RuvA(8)-RuvB(12)-Holliday junction (HJ) complex. HJ DNA is sandwiched between 2 RuvA tetramers; dsDNA enters through RuvA and exits via RuvB. An RuvB hexamer assembles on each DNA strand where it exits the tetramer. Each RuvB hexamer is contacted by two RuvA subunits (via domain III) on 2 adjacent RuvB subunits; this complex drives branch migration. In the full resolvosome a probable DNA-RuvA(4)-RuvB(12)-RuvC(2) complex forms which resolves the HJ.

The protein resides in the cytoplasm. It catalyses the reaction ATP + H2O = ADP + phosphate + H(+). Functionally, the RuvA-RuvB-RuvC complex processes Holliday junction (HJ) DNA during genetic recombination and DNA repair, while the RuvA-RuvB complex plays an important role in the rescue of blocked DNA replication forks via replication fork reversal (RFR). RuvA specifically binds to HJ cruciform DNA, conferring on it an open structure. The RuvB hexamer acts as an ATP-dependent pump, pulling dsDNA into and through the RuvAB complex. RuvB forms 2 homohexamers on either side of HJ DNA bound by 1 or 2 RuvA tetramers; 4 subunits per hexamer contact DNA at a time. Coordinated motions by a converter formed by DNA-disengaged RuvB subunits stimulates ATP hydrolysis and nucleotide exchange. Immobilization of the converter enables RuvB to convert the ATP-contained energy into a lever motion, pulling 2 nucleotides of DNA out of the RuvA tetramer per ATP hydrolyzed, thus driving DNA branch migration. The RuvB motors rotate together with the DNA substrate, which together with the progressing nucleotide cycle form the mechanistic basis for DNA recombination by continuous HJ branch migration. Branch migration allows RuvC to scan DNA until it finds its consensus sequence, where it cleaves and resolves cruciform DNA. This Roseiflexus castenholzii (strain DSM 13941 / HLO8) protein is Holliday junction branch migration complex subunit RuvB.